Consider the following 276-residue polypeptide: NAD-capped RNA hydrolase NudC (276 aa).

Arg-82 is a substrate binding site. Positions 112 and 115 each coordinate Zn(2+). Substrate is bound at residue Glu-125. Residues Cys-130 and Cys-133 each contribute to the Zn(2+) site. Tyr-138 contributes to the substrate binding site. The region spanning 139-262 is the Nudix hydrolase domain; that stretch reads PRISPSMIVL…SIARYLIDLY (124 aa). The a divalent metal cation site is built by Ala-172, Glu-188, and Glu-192. A Nudix box motif is present at residues 173-194; it reads GFAEPGESAEDCLVREVREEVA. 206–213 contributes to the substrate binding site; that stretch reads QCWPFPHS. Glu-233 contributes to the a divalent metal cation binding site. Ala-255 provides a ligand contact to substrate.

This sequence belongs to the Nudix hydrolase family. NudC subfamily. As to quaternary structure, homodimer. Mg(2+) serves as cofactor. Requires Mn(2+) as cofactor. The cofactor is Zn(2+).

The enzyme catalyses a 5'-end NAD(+)-phospho-ribonucleoside in mRNA + H2O = a 5'-end phospho-adenosine-phospho-ribonucleoside in mRNA + beta-nicotinamide D-ribonucleotide + 2 H(+). It carries out the reaction NAD(+) + H2O = beta-nicotinamide D-ribonucleotide + AMP + 2 H(+). The catalysed reaction is NADH + H2O = reduced beta-nicotinamide D-ribonucleotide + AMP + 2 H(+). Functionally, mRNA decapping enzyme that specifically removes the nicotinamide adenine dinucleotide (NAD) cap from a subset of mRNAs by hydrolyzing the diphosphate linkage to produce nicotinamide mononucleotide (NMN) and 5' monophosphate mRNA. The NAD-cap is present at the 5'-end of some mRNAs and stabilizes RNA against 5'-processing. Has preference for mRNAs with a 5'-end purine. Catalyzes the hydrolysis of a broad range of dinucleotide pyrophosphates. The polypeptide is NAD-capped RNA hydrolase NudC (Pseudomonas putida (strain W619)).